The following is a 233-amino-acid chain: Probable transglycosylase IsaA (233 aa).

Residues 1–29 (MKKTIMASSLAVALGVTGYAASTGHEAHA) form the signal peptide.

It belongs to the transglycosylase family. IsaA subfamily.

The protein localises to the secreted. Its function is as follows. Is able to cleave peptidoglycan. The polypeptide is Probable transglycosylase IsaA (isaA) (Staphylococcus aureus (strain bovine RF122 / ET3-1)).